Consider the following 579-residue polypeptide: 6-deoxy-6-sulfo-D-gluconate dehydratase (579 aa).

Positions 59, 127, and 200 each coordinate [4Fe-4S] cluster.

This sequence belongs to the IlvD/Edd family. In terms of assembly, homodimer. [4Fe-4S] cluster serves as cofactor.

It catalyses the reaction 6-deoxy-6-sulfo-D-gluconate = 2-dehydro-3,6-dideoxy-6-sulfo-D-gluconate + H2O. In terms of biological role, catalyzes the dehydration of 6-deoxy-6-sulfo-D-gluconate to 2-dehydro-3,6-dideoxy-6-sulfo-D-gluconate. Is involved in a degradation pathway of sulfoquinovose (SQ) that allows P.putida SQ1 to use SQ as the sole carbon and energy source for growth. This chain is 6-deoxy-6-sulfo-D-gluconate dehydratase, found in Pseudomonas putida (Arthrobacter siderocapsulatus).